A 457-amino-acid polypeptide reads, in one-letter code: MTVTVRFAPSPTGYIHIGNTRTALSNWLYASKNNGKFILRYDDTDVERSKDEYAQAIAVDLDWLGVRPDRVEYQSKRFDIYAKAVEKLKTAGLLYACYETADELERRRKFRLARRLPPVYGREALKLTDAEKAALEAEGRKPHWRFLLPNFESDPFATQRTEVHWDDLVRGPQTVDLASMSDPILVREDGTYLYTLPSVVDDIDMGVTHIIRGDDHVTNTGVQISIFKALGATPPVFGHHNLLTTISGEGLSKRTGALSVGSLREAGYEPMAVASLAILIGTSESVTAAPDMAALAEHFDLASISKSSAKFDPSELDALNRSLLHEMPFEKAKPRLEALGICGAKAESFWLAVRGNLDRFSDVSHWWQVVSGDLPEAPDLSGEDRDFVRHAFDLLPPEPWNGQTWKSWTEAVKSATGRKGKNLFMPLRLALTGQAHGPELADLLVLVGLERTKSRRP.

The 'HIGH' region motif lies at Pro-9–Asn-19. The 'KMSKS' region signature appears at Gly-250–Arg-254. Lys-253 provides a ligand contact to ATP.

The protein belongs to the class-I aminoacyl-tRNA synthetase family. Glutamate--tRNA ligase type 1 subfamily. Monomer.

It localises to the cytoplasm. The catalysed reaction is tRNA(Glu) + L-glutamate + ATP = L-glutamyl-tRNA(Glu) + AMP + diphosphate. Its function is as follows. Catalyzes the attachment of glutamate to tRNA(Glu) in a two-step reaction: glutamate is first activated by ATP to form Glu-AMP and then transferred to the acceptor end of tRNA(Glu). This chain is Glutamate--tRNA ligase 1, found in Brucella abortus (strain S19).